Reading from the N-terminus, the 157-residue chain is Cyclic pyranopterin monophosphate synthase (157 aa).

Substrate is bound by residues 74–76 and 112–113; these read MCH and ME. Residue Asp127 is part of the active site.

It belongs to the MoaC family. In terms of assembly, homohexamer; trimer of dimers.

It carries out the reaction (8S)-3',8-cyclo-7,8-dihydroguanosine 5'-triphosphate = cyclic pyranopterin phosphate + diphosphate. It participates in cofactor biosynthesis; molybdopterin biosynthesis. In terms of biological role, catalyzes the conversion of (8S)-3',8-cyclo-7,8-dihydroguanosine 5'-triphosphate to cyclic pyranopterin monophosphate (cPMP). This chain is Cyclic pyranopterin monophosphate synthase, found in Syntrophomonas wolfei subsp. wolfei (strain DSM 2245B / Goettingen).